The sequence spans 682 residues: MNGDLEVDMSRGDFNPSFFLGKLKDDEFESRSLSDDSFDAMSGDEDKQEQRPKKKKRKTKYHRHTSYQIQELESFFKECPHPNEKQRLELGKKLTLESKQIKFWFQNRRTQMKTQLERHENVILKQENEKLRLENSFLKESMRGSLCIDCGGAVIPGEVSFEQHQLRIENAKLKEELDRICALANRFIGGSISLEQPSNGGIGSQHLPIGHCVSGGTSLMFMDLAMEAMDELLKLAELETSLWSSKSEKGSMNHFPGSRETGLVLINSLALVETLMDTNKWAEMFECIVAVASTLEVISNGSDGSRNGSILLMQAEFQVMSPLVPIKQKKFLRYCKQHGDGLWAVVDVSYDINRGNENLKSYGGSKMFPSGCIIQDIGNGCSKVTWIEHSEYEESHTHSLYQPLLSSSVGLGATKWLATLQRQCESFTMLLSSEDHTGLSHAGTKSILKLAQRMKLNFYSGITASCIHKWEKLLAENVGQDTRILTRKSLEPSGIVLSAATSLWLPVTQQRLFEFLCDGKCRNQWDILSNGASMENTLLVPKGQQEGSCVSLLRAAGNDQNESSMLILQETWNDVSGALVVYAPVDIPSMNTVMSGGDSAYVALLPSGFSILPDGSSSSSDQFDTDGGLVNQESKGCLLTVGFQILVNSLPTAKLNVESVETVNNLIACTIHKIRAALRIPA.

The segment at 33–65 (LSDDSFDAMSGDEDKQEQRPKKKKRKTKYHRHT) is disordered. A compositionally biased stretch (basic residues) spans 52 to 65 (PKKKKRKTKYHRHT). A DNA-binding region (homeobox) is located at residues 57–116 (RKTKYHRHTSYQIQELESFFKECPHPNEKQRLELGKKLTLESKQIKFWFQNRRTQMKTQL). Residues 105–186 (FQNRRTQMKT…LDRICALANR (82 aa)) adopt a coiled-coil conformation. The region spanning 214–429 (SGGTSLMFMD…LQRQCESFTM (216 aa)) is the START domain.

The protein belongs to the HD-ZIP homeobox family. Class IV subfamily. In terms of assembly, interacts with AIL7/PLT7. Expressed in cells around the base of leaf primordia, in the outermost 2 to 3 cell layers along the boundary between two leaf primordia. Expressed in lateral root primordia and tips, and in the epidermal boundaries of two cotyledons at heart-stage embryo.

It localises to the nucleus. Functionally, probable transcription factor that binds to the DNA sequence 5'-GCATTAAATGC-3'. Seems to promote cell differentiation. The protein is Homeobox-leucine zipper protein HDG7 of Arabidopsis thaliana (Mouse-ear cress).